Consider the following 140-residue polypeptide: Large-conductance mechanosensitive channel (140 aa).

The next 2 helical transmembrane spans lie at 16–36 (VIDL…VTAL) and 84–104 (INTV…VKLI).

Belongs to the MscL family. Homopentamer.

It is found in the cell inner membrane. Channel that opens in response to stretch forces in the membrane lipid bilayer. May participate in the regulation of osmotic pressure changes within the cell. In Xanthomonas oryzae pv. oryzae (strain MAFF 311018), this protein is Large-conductance mechanosensitive channel.